The chain runs to 346 residues: Phosphoribosylformylglycinamidine cyclo-ligase (346 aa).

Belongs to the AIR synthase family.

The protein resides in the cytoplasm. The catalysed reaction is 2-formamido-N(1)-(5-O-phospho-beta-D-ribosyl)acetamidine + ATP = 5-amino-1-(5-phospho-beta-D-ribosyl)imidazole + ADP + phosphate + H(+). It participates in purine metabolism; IMP biosynthesis via de novo pathway; 5-amino-1-(5-phospho-D-ribosyl)imidazole from N(2)-formyl-N(1)-(5-phospho-D-ribosyl)glycinamide: step 2/2. The chain is Phosphoribosylformylglycinamidine cyclo-ligase from Bacillus cereus (strain ATCC 10987 / NRS 248).